The sequence spans 247 residues: E3 ubiquitin ligase TRIM40 (247 aa).

The RING-type zinc finger occupies 12–55 (CPICLDPLKEAVSTDCRHLFCRMCLIRHMDKASVSGVLSCPVCR). The B box-type zinc finger occupies 64–105 (GDNYICHTHQKRVCRFCESSRHLLCEECLQSPEHRAHTELSI). Zn(2+)-binding residues include Cys69, His72, Cys91, and His97. The stretch at 111 to 148 (HYKERLNRRSRKLRKDLGDLQRLKAQEEKMLQALQVDW) forms a coiled coil.

It belongs to the TRIM/RBCC family. Interacts with NEDD8.

It carries out the reaction S-ubiquitinyl-[E2 ubiquitin-conjugating enzyme]-L-cysteine + [acceptor protein]-L-lysine = [E2 ubiquitin-conjugating enzyme]-L-cysteine + N(6)-ubiquitinyl-[acceptor protein]-L-lysine.. In terms of biological role, E3 ubiquitin-protein ligase that plays a role in the limitation of the innate immune response. Mediates inhibition of the RLR signaling pathway by ubiquitinating RIGI and IFIH1 receptors, leading to their proteasomal degradation. Also promotes the neddylation of IKBKG/NEMO, stabilizing NFKBIA, and thereby inhibiting of NF-kappa-B nuclear translocation and activation. In Rattus norvegicus (Rat), this protein is E3 ubiquitin ligase TRIM40 (Trim40).